A 197-amino-acid chain; its full sequence is Ribosome maturation factor RimP (197 aa).

Belongs to the RimP family.

The protein resides in the cytoplasm. Required for maturation of 30S ribosomal subunits. The sequence is that of Ribosome maturation factor RimP from Acidovorax ebreus (strain TPSY) (Diaphorobacter sp. (strain TPSY)).